The following is a 304-amino-acid chain: Ribosomal RNA small subunit methyltransferase H (304 aa).

Residues 37-39, Asp57, Phe79, Asp100, and His107 contribute to the S-adenosyl-L-methionine site; that span reads AGH.

Belongs to the methyltransferase superfamily. RsmH family.

The protein resides in the cytoplasm. The catalysed reaction is cytidine(1402) in 16S rRNA + S-adenosyl-L-methionine = N(4)-methylcytidine(1402) in 16S rRNA + S-adenosyl-L-homocysteine + H(+). Functionally, specifically methylates the N4 position of cytidine in position 1402 (C1402) of 16S rRNA. This Bacteroides thetaiotaomicron (strain ATCC 29148 / DSM 2079 / JCM 5827 / CCUG 10774 / NCTC 10582 / VPI-5482 / E50) protein is Ribosomal RNA small subunit methyltransferase H.